Consider the following 215-residue polypeptide: Large ribosomal subunit protein bL25 (215 aa).

Positions 192-203 are enriched in acidic residues; that stretch reads EEATEEEEEAAE. The interval 192–215 is disordered; sequence EEATEEEEEAAEPEVIKRKEEEEE. Residues 205–215 show a composition bias toward basic and acidic residues; the sequence is EVIKRKEEEEE.

This sequence belongs to the bacterial ribosomal protein bL25 family. CTC subfamily. Part of the 50S ribosomal subunit; part of the 5S rRNA/L5/L18/L25 subcomplex. Contacts the 5S rRNA. Binds to the 5S rRNA independently of L5 and L18.

Functionally, this is one of the proteins that binds to the 5S RNA in the ribosome where it forms part of the central protuberance. The sequence is that of Large ribosomal subunit protein bL25 from Thermotoga maritima (strain ATCC 43589 / DSM 3109 / JCM 10099 / NBRC 100826 / MSB8).